The sequence spans 617 residues: V-type proton ATPase catalytic subunit A (617 aa).

250–257 (GAFGCGKT) provides a ligand contact to ATP. At S384 the chain carries Phosphoserine; by AMPK.

This sequence belongs to the ATPase alpha/beta chains family. As to quaternary structure, V-ATPase is a heteromultimeric enzyme made up of two complexes: the ATP-hydrolytic V1 complex and the proton translocation V0 complex. The V1 complex consists of three catalytic AB heterodimers that form a heterohexamer, three peripheral stalks each consisting of EG heterodimers, one central rotor including subunits D and F, and the regulatory subunits C and H. The proton translocation complex V0 consists of the proton transport subunit a, a ring of proteolipid subunits c9c'', rotary subunit d, subunits e and f, and the accessory subunits ATP6AP1/Ac45 and ATP6AP2/PRR. Interacts with the V0 complex V-ATPase subunit a4 ATP6V0A4. Interacts with WFS1. Interacts with alpha-crystallin B chain/CRYAB and with MTOR, forming a ternary complex. Phosphorylation at Ser-384 by AMPK down-regulates its enzyme activity.

The protein resides in the cytoplasm. The protein localises to the cytosol. It is found in the cytoplasmic vesicle. Its subcellular location is the secretory vesicle. It localises to the clathrin-coated vesicle membrane. The protein resides in the lysosome. It catalyses the reaction ATP + H2O + 4 H(+)(in) = ADP + phosphate + 5 H(+)(out). With respect to regulation, ATP hydrolysis occurs at the interface between the nucleotide-binding domains of subunits A and B. ATP hydrolysis triggers a conformational change in the subunits D and F, which induces a shift of subunit d. The c-ring is subsequently rotated and results in a continuous proton translocation across the membrane. In terms of biological role, catalytic subunit of the V1 complex of vacuolar(H+)-ATPase (V-ATPase), a multisubunit enzyme composed of a peripheral complex (V1) that hydrolyzes ATP and a membrane integral complex (V0) that translocates protons. V-ATPase is responsible for acidifying and maintaining the pH of intracellular compartments and in some cell types, is targeted to the plasma membrane, where it is responsible for acidifying the extracellular environment. In aerobic conditions, involved in intracellular iron homeostasis, thus triggering the activity of Fe(2+) prolyl hydroxylase (PHD) enzymes, and leading to HIF1A hydroxylation and subsequent proteasomal degradation. May play a role in neurite development and synaptic connectivity. This chain is V-type proton ATPase catalytic subunit A (Atp6v1a), found in Mus musculus (Mouse).